A 466-amino-acid chain; its full sequence is ATP synthase subunit beta (466 aa).

155 to 162 (GGAGVGKT) lines the ATP pocket.

This sequence belongs to the ATPase alpha/beta chains family. As to quaternary structure, F-type ATPases have 2 components, CF(1) - the catalytic core - and CF(0) - the membrane proton channel. CF(1) has five subunits: alpha(3), beta(3), gamma(1), delta(1), epsilon(1). CF(0) has three main subunits: a(1), b(2) and c(9-12). The alpha and beta chains form an alternating ring which encloses part of the gamma chain. CF(1) is attached to CF(0) by a central stalk formed by the gamma and epsilon chains, while a peripheral stalk is formed by the delta and b chains.

Its subcellular location is the cell inner membrane. The enzyme catalyses ATP + H2O + 4 H(+)(in) = ADP + phosphate + 5 H(+)(out). In terms of biological role, produces ATP from ADP in the presence of a proton gradient across the membrane. The catalytic sites are hosted primarily by the beta subunits. This chain is ATP synthase subunit beta, found in Bordetella petrii (strain ATCC BAA-461 / DSM 12804 / CCUG 43448).